The sequence spans 380 residues: MAPNLRKSHPLLKMINNSLIDLPTPSNISAWWNFGSLLGICLMTQILTGLLLAMHYTADTTLAFSSVAHTCRNVQYGWLIRNLHANGASFFFICIYLHIGRGFYYGSYLYKETWNTGIILLLTLMATAFVGYVLPWGQMSFWGATVITNLFSAIPYIGQTLVEWAWGGFSVDNPTLTRFFALHFLLPFAIAGLTLIHLTFLHESGSNNPLGIMSNCDKIPFHPYFTLKDILGFTLMFLPLTSLALFSPNLLGDPENFTPANPLVTPPHIKPEWYFLFAYAILRSIPNKLGGVLALAASVLILFLSPFLHKAKQRTMTFRPLSQLLFWILVTNLFILTWVGSQPVEHPFIIIGQLASITYFTILLILFPVIGTLENKMLNY.

The next 4 helical transmembrane spans lie at 34–54, 78–99, 114–134, and 179–199; these read FGSL…LLAM, WLIR…YLHI, WNTG…GYVL, and FFAL…IHLT. 2 residues coordinate heme b: His84 and His98. Positions 183 and 197 each coordinate heme b. An a ubiquinone-binding site is contributed by His202. Helical transmembrane passes span 227–247, 289–309, 321–341, and 348–368; these read LKDI…ALFS, LGGV…PFLH, LSQL…WVGS, and FIII…ILFP.

It belongs to the cytochrome b family. As to quaternary structure, the cytochrome bc1 complex contains 11 subunits: 3 respiratory subunits (MT-CYB, CYC1 and UQCRFS1), 2 core proteins (UQCRC1 and UQCRC2) and 6 low-molecular weight proteins (UQCRH/QCR6, UQCRB/QCR7, UQCRQ/QCR8, UQCR10/QCR9, UQCR11/QCR10 and a cleavage product of UQCRFS1). This cytochrome bc1 complex then forms a dimer. The cofactor is heme b.

The protein resides in the mitochondrion inner membrane. In terms of biological role, component of the ubiquinol-cytochrome c reductase complex (complex III or cytochrome b-c1 complex) that is part of the mitochondrial respiratory chain. The b-c1 complex mediates electron transfer from ubiquinol to cytochrome c. Contributes to the generation of a proton gradient across the mitochondrial membrane that is then used for ATP synthesis. This is Cytochrome b (MT-CYB) from Daption capense (Cape petrel).